We begin with the raw amino-acid sequence, 85 residues long: Small ribosomal subunit protein bS18 (85 aa).

This sequence belongs to the bacterial ribosomal protein bS18 family. In terms of assembly, part of the 30S ribosomal subunit. Forms a tight heterodimer with protein bS6.

In terms of biological role, binds as a heterodimer with protein bS6 to the central domain of the 16S rRNA, where it helps stabilize the platform of the 30S subunit. In Solidesulfovibrio magneticus (strain ATCC 700980 / DSM 13731 / RS-1) (Desulfovibrio magneticus), this protein is Small ribosomal subunit protein bS18.